The sequence spans 340 residues: Uroporphyrinogen decarboxylase (340 aa).

Residues 21 to 25, aspartate 71, tyrosine 147, serine 202, and histidine 315 contribute to the substrate site; that span reads RQAGR.

The protein belongs to the uroporphyrinogen decarboxylase family. Homodimer.

Its subcellular location is the cytoplasm. It carries out the reaction uroporphyrinogen III + 4 H(+) = coproporphyrinogen III + 4 CO2. Its pathway is porphyrin-containing compound metabolism; protoporphyrin-IX biosynthesis; coproporphyrinogen-III from 5-aminolevulinate: step 4/4. Catalyzes the decarboxylation of four acetate groups of uroporphyrinogen-III to yield coproporphyrinogen-III. This Nautilia profundicola (strain ATCC BAA-1463 / DSM 18972 / AmH) protein is Uroporphyrinogen decarboxylase.